The following is a 5146-amino-acid chain: SCO-spondin (5146 aa).

The N-terminal stretch at Met-1–Gly-17 is a signal peptide. The region spanning Arg-18–His-94 is the EMI domain. N-linked (GlcNAc...) asparagine glycans are attached at residues Asn-80, Asn-122, and Asn-153. The VWFD 1 domain maps to Ala-185–Leu-356. Cystine bridges form between Cys-187–Cys-317, Cys-209–Cys-355, and Cys-231–Cys-237. Residue Asn-255 is glycosylated (N-linked (GlcNAc...) asparagine). One can recognise a TIL 1 domain in the interval Cys-464–Cys-519. The 174-residue stretch at Ala-557–Ser-730 folds into the VWFD 2 domain. Cystine bridges form between Cys-559/Cys-692 and Cys-583/Cys-729. N-linked (GlcNAc...) asparagine glycosylation is present at Asn-814. The TIL 2 domain occupies Cys-822–Cys-875. Residue Asn-906 is glycosylated (N-linked (GlcNAc...) asparagine). A VWFD 3 domain is found at Gly-1008–Pro-1178. Intrachain disulfides connect Cys-1010–Cys-1142, Cys-1032–Cys-1177, and Cys-1053–Cys-1060. Residues Cys-1271–Cys-1327 enclose the TIL 3 domain. An N-linked (GlcNAc...) asparagine glycan is attached at Asn-1349. 6 consecutive LDL-receptor class A domains span residues Gly-1372–Ala-1409, Val-1412–Cys-1447, Pro-1448–Leu-1484, Asp-1488–Pro-1526, Pro-1561–Asp-1597, and Pro-1599–Glu-1638. Cystine bridges form between Cys-1373–Cys-1386, Cys-1380–Cys-1399, Cys-1393–Cys-1408, Cys-1413–Cys-1425, Cys-1420–Cys-1438, Cys-1432–Cys-1447, Cys-1449–Cys-1461, Cys-1456–Cys-1474, Cys-1468–Cys-1483, Cys-1489–Cys-1501, Cys-1496–Cys-1514, Cys-1508–Cys-1525, Cys-1562–Cys-1574, Cys-1569–Cys-1587, Cys-1581–Cys-1596, Cys-1600–Cys-1613, Cys-1607–Cys-1626, and Cys-1620–Cys-1637. Residue Asn-1647 is glycosylated (N-linked (GlcNAc...) asparagine). Positions Pro-1652–Gly-1690 constitute an LDL-receptor class A 7 domain. TSP type-1 domains are found at residues Cys-1691 to Pro-1745 and Asp-1747 to Pro-1805. 3 cysteine pairs are disulfide-bonded: Cys-1703–Cys-1739, Cys-1707–Cys-1744, and Cys-1718–Cys-1729. Asn-1806 carries an N-linked (GlcNAc...) asparagine glycan. Positions Cys-1809–Cys-1865 constitute a TIL 4 domain. EGF-like domains are found at residues Cys-1821–Val-1860 and Trp-1861–Gln-1898. The 57-residue stretch at Asn-1906 to Glu-1962 folds into the TSP type-1 3 domain. Intrachain disulfides connect Cys-1907–Cys-1946, Cys-1918–Cys-1922, and Cys-1956–Cys-1961. Residues Glu-1962–Val-2022 enclose the VWFC 1 domain. N-linked (GlcNAc...) asparagine glycosylation is found at Asn-2027 and Asn-2127. Cystine bridges form between Cys-2062–Cys-2220, Cys-2226–Cys-2238, Cys-2233–Cys-2251, and Cys-2245–Cys-2260. The F5/8 type C domain maps to Cys-2062 to Cys-2220. The LDL-receptor class A 8 domain maps to Leu-2225–Val-2261. Residues Thr-2262 to Ala-2346 are disordered. Polar residues-rich tracts occupy residues Thr-2273 to Pro-2284 and Gly-2331 to Glu-2343. LDL-receptor class A domains are found at residues Gln-2382 to Ala-2418 and Leu-2442 to Val-2478. Cystine bridges form between Cys-2383–Cys-2395, Cys-2390–Cys-2408, Cys-2402–Cys-2417, Cys-2443–Cys-2455, Cys-2450–Cys-2468, Cys-2462–Cys-2477, Cys-2480–Cys-2516, Cys-2491–Cys-2495, Cys-2526–Cys-2531, Cys-2546–Cys-2583, Cys-2550–Cys-2588, and Cys-2561–Cys-2573. TSP type-1 domains lie at Asp-2479 to Pro-2532 and Ala-2534 to Ala-2589. Positions Val-2611 to Cys-2654 constitute a TIL 5 domain. N-linked (GlcNAc...) asparagine glycans are attached at residues Asn-2624 and Asn-2673. TSP type-1 domains follow at residues Pro-2694–Gly-2748, Val-2751–Leu-2807, and Leu-2809–Thr-2862. 9 disulfide bridges follow: Cys-2695–Cys-2733, Cys-2706–Cys-2710, Cys-2743–Cys-2747, Cys-2763–Cys-2801, Cys-2767–Cys-2806, Cys-2783–Cys-2791, Cys-2821–Cys-2856, Cys-2825–Cys-2861, and Cys-2836–Cys-2846. N-linked (GlcNAc...) asparagine glycosylation is found at Asn-2915 and Asn-2946. 2 TSP type-1 domains span residues Ala-2964–Gly-3019 and Gly-3020–Pro-3071. Intrachain disulfides connect Cys-2965/Cys-3003, Cys-2976/Cys-2980, and Cys-3013/Cys-3018. N-linked (GlcNAc...) asparagine glycosylation occurs at Asn-3041. Positions Cys-3070–Cys-3122 constitute a TIL 6 domain. 2 N-linked (GlcNAc...) asparagine glycosylation sites follow: Asn-3143 and Asn-3153. TSP type-1 domains follow at residues Gln-3163–Asp-3230 and Ala-3232–Pro-3287. Disulfide bonds link Cys-3175-Cys-3224, Cys-3179-Cys-3229, Cys-3190-Cys-3214, Cys-3244-Cys-3281, Cys-3248-Cys-3286, and Cys-3259-Cys-3271. The N-linked (GlcNAc...) asparagine glycan is linked to Asn-3290. The TIL 7 domain occupies Glu-3295–Cys-3345. 2 TSP type-1 domains span residues Pro-3388–Pro-3450 and Asp-3452–Thr-3507. 6 disulfides stabilise this stretch: Cys-3400-Cys-3443, Cys-3404-Cys-3449, Cys-3415-Cys-3427, Cys-3464-Cys-3499, Cys-3467-Cys-3506, and Cys-3477-Cys-3489. N-linked (GlcNAc...) asparagine glycans are attached at residues Asn-3502, Asn-3580, and Asn-3607. One can recognise a TSP type-1 15 domain in the interval Leu-3626–Arg-3674. Cystine bridges form between Cys-3638–Cys-3668, Cys-3642–Cys-3673, and Cys-3653–Cys-3658. N-linked (GlcNAc...) asparagine glycosylation occurs at Asn-3783. TSP type-1 domains are found at residues Ala-3802 to Pro-3858, Pro-3872 to Thr-3924, Asn-3938 to Pro-3994, and Pro-3996 to Glu-4051. 3 disulfides stabilise this stretch: Cys-3814–Cys-3852, Cys-3818–Cys-3857, and Cys-3830–Cys-3842. Asn-3906 and Asn-3938 each carry an N-linked (GlcNAc...) asparagine glycan. 6 disulfides stabilise this stretch: Cys-3939–Cys-3975, Cys-3950–Cys-3954, Cys-3988–Cys-3993, Cys-4008–Cys-4045, Cys-4012–Cys-4050, and Cys-4023–Cys-4035. A TIL 8 domain is found at Cys-4054–Cys-4109. Residues Gly-4101–Gly-4168 enclose the VWFC 2 domain. Residue Asn-4131 is glycosylated (N-linked (GlcNAc...) asparagine). TSP type-1 domains lie at His-4151–Pro-4204, Leu-4245–Pro-4300, Leu-4302–Leu-4358, and Glu-4360–Ser-4414. Disulfide bonds link Cys-4152–Cys-4188, Cys-4163–Cys-4167, Cys-4198–Cys-4203, Cys-4257–Cys-4294, Cys-4261–Cys-4299, and Cys-4272–Cys-4284. N-linked (GlcNAc...) asparagine glycosylation is present at Asn-4341. 3 cysteine pairs are disulfide-bonded: Cys-4361–Cys-4398, Cys-4372–Cys-4374, and Cys-4408–Cys-4413. An N-linked (GlcNAc...) asparagine glycan is attached at Asn-4412. Residues Cys-4418 to Cys-4473 form the TIL 9 domain. A TSP type-1 24 domain is found at Leu-4610–Pro-4661. Disulfide bonds link Cys-4611-Cys-4645, Cys-4622-Cys-4626, and Cys-4655-Cys-4660. The TIL 10 domain occupies Asp-4675–Cys-4721. 4 N-linked (GlcNAc...) asparagine glycosylation sites follow: Asn-4729, Asn-4746, Asn-4751, and Asn-4772. Residues Cys-4761–Pro-4814 form the TSP type-1 25 domain. Cystine bridges form between Cys-4773-Cys-4808, Cys-4777-Cys-4813, and Cys-4788-Cys-4797. Residues Cys-4816–Cys-4870 form the TIL 11 domain. N-linked (GlcNAc...) asparagine glycans are attached at residues Asn-4861, Asn-4901, Asn-4947, and Asn-4954. A VWFC 3 domain is found at Cys-4983 to Arg-5041. 4 cysteine pairs are disulfide-bonded: Cys-5052–Cys-5100, Cys-5066–Cys-5117, Cys-5076–Cys-5133, and Cys-5080–Cys-5135. The region spanning Cys-5052–Gln-5139 is the CTCK domain. Residue Asn-5060 is glycosylated (N-linked (GlcNAc...) asparagine).

This sequence belongs to the thrombospondin family. As to expression, subcommissural organ. Located at the boundary of the diencephalon and mesencephalon beneath the posterior commissure at the point where the axons cross the midline.

It is found in the secreted. The protein resides in the extracellular space. Involved in the modulation of neuronal aggregation. May be involved in developmental events during the formation of the central nervous system. The protein is SCO-spondin (SSPO) of Bos taurus (Bovine).